We begin with the raw amino-acid sequence, 63 residues long: Hyphancin-3F (63 aa).

A signal peptide spans 1-22 (MNFSRILFFVFACFVALASVSA). Residues 23–26 (APEP) constitute a propeptide, removed by a dipeptidylpeptidase. Leu61 carries the post-translational modification Leucine amide.

It belongs to the cecropin family.

It localises to the secreted. Has antibacterial activity. The chain is Hyphancin-3F from Hyphantria cunea (Fall webworm moth).